The chain runs to 395 residues: Teichoic acid D-alanyltransferase (395 aa).

Over 1-6 (MTPYSS) the chain is Extracellular. Residues 7 to 26 (FLFFILLGILLLPTIILGLN) form a helical membrane-spanning segment. Residues 27-30 (GKRF) are Cytoplasmic-facing. The helical transmembrane segment at 31–46 (QAYNMFISIIILALIF) threads the bilayer. Residues 47 to 50 (SHDL) are Extracellular-facing. A helical transmembrane segment spans residues 51–76 (HGVIALCLFTIWQVLLISGYLAYRQK). The Cytoplasmic portion of the chain corresponds to 77–79 (ANS). Residues 80-104 (GFVFCGAVIASILPLFLSKIWPFLS) form a helical membrane-spanning segment. Topologically, residues 105–120 (HPQPHHPPHNLISFLG) are extracellular. The chain crosses the membrane as a helical span at residues 121-137 (ISYLTFKGVQLIMEARD). The Cytoplasmic portion of the chain corresponds to 138 to 145 (GLLKEQLP). The stretch at 146–175 (LHRLLYFILFFPTISSGPIDRYRRFVKDEQ) is an intramembrane region. Over 176–179 (KAWT) the chain is Cytoplasmic. A helical membrane pass occupies residues 180-223 (KEEYADLLYTGIHKIFIGFLYKFIIGYAINTYFIMNLPAITHNK). Ile-224 is a topological domain (extracellular). Residues 225–256 (LGNLLYMYGYSMYLFFDFAGYTMFAVGVSYIM) traverse the membrane as a helical segment. Topologically, residues 257–266 (GIKSPENFNK) are cytoplasmic. An intramembrane segment occupies 267 to 303 (PFISKNIKDFWNRWHMSLSFWFRDYVFMRFVFWMTKK). At 304–308 (KWIKN) the chain is on the cytoplasmic side. A helical membrane pass occupies residues 309 to 328 (RMAVSNIGYFLLFMLMGVWH). His-328 is an active-site residue. Topologically, residues 329–333 (GLAPQ) are extracellular. The helical transmembrane segment at 334-351 (YIIYGLYHAVLMTCYNFF) threads the bilayer. Over 352 to 364 (EKWNKKYKWLPSN) the chain is Cytoplasmic. Residues 365-387 (RWTTILAIVITFHFVCFGFYIFS) form a helical membrane-spanning segment. At 388-395 (GKPFHHHH) the chain is on the extracellular side.

Belongs to the membrane-bound acyltransferase family.

It localises to the cell membrane. It participates in cell wall biogenesis; lipoteichoic acid biosynthesis. Functionally, O-acyltransferase that catalyzes D-alanylation of both teichoic acid and lipoteichoic acid (LTA). D-alanylation of LTA plays an important role in modulating the properties of the cell wall in Gram-positive bacteria, influencing the net charge of the cell wall. Catalyzes D-alanylation from DltC carrier protein. This Bacillus subtilis (strain 168) protein is Teichoic acid D-alanyltransferase.